Consider the following 538-residue polypeptide: MGGEADSRQPLTAEGVAVAVNVRCSNGTKFSVTTSLDSTVESFKELIAQNSDVPANQQRLIYKGRILKDDQTLLSYGLQADHTVHMVRGFVPSSPSAPAANAGNQTTAPQAVGSNDSSNLGGGESLFPGLGFNPLGGGNAMAGLFGSGLPDLEQAQQQLAQNPNMIREMMNTPAIQNLMNNPEFMRSMIMNNPQMRELVDRNPELGHVLNDPSILRQTLEAARNPELMREMMRNTDRAMSNIESMPEGFNMLRRMYENVQEPLMNATTMSENAGNNTSSNPFAALLGNQGVTTQGSDTSNNISAPNAETGTPNANPLPNPWGATAGQTTAPGRTNAGLGGLGGLGGLGGLGMLGADSPLGATPDASQLSQILQNPAMSQMMQSVLSNPQYMNQLMSLNPQLRSMLDMNPQLREMMQNPDFLRQFSSPEMMQQMMSLQQSLFSQNRNTAGQDPTQTGAATGTANNGGLDLLMNMFGSLGAGGLSGTNQPNVPPEERFATQLQQLQEMGFYDRAENIRALLATNGNVNAAVERLLGSIGQ.

One can recognise a Ubiquitin-like domain in the interval 18-93 (VAVNVRCSNG…VHMVRGFVPS (76 aa)). A disordered region spans residues 95 to 120 (PSAPAANAGNQTTAPQAVGSNDSSNL). Positions 102 to 119 (AGNQTTAPQAVGSNDSSN) are enriched in polar residues. 2 consecutive STI1 domains span residues 138-179 (GNAM…QNLM) and 192-231 (NPQM…MREM). The interval 289–316 (QGVTTQGSDTSNNISAPNAETGTPNANP) is disordered. STI1 domains lie at 357–394 (SPLG…MNQL) and 398–433 (NPQL…MQQM). In terms of domain architecture, UBA spans 491–535 (PPEERFATQLQQLQEMGFYDRAENIRALLATNGNVNAAVERLLGS).

Interacts with 'Lys-48'-linked polyubiquitin chains via its UBA domain. Interacts with RPN10 and RPN13. Interacts with PEX2 and PEX12. As to expression, ubiquitous with a strong expression level in inflorescence.

It is found in the nucleus. It localises to the cytoplasm. In terms of biological role, binds and presumably selects ubiquitin-conjugates for destruction. Prefers multiubiquitin chains rather than single ubiquitins, with a binding affinity for 'Lys-48'-linked ubiquitin chains. Acts as a ubiquitin receptor that associates with the 26S proteasomal docking subunit RPN10 for the indirect recognition of ubiquitinated substrates of ubiquitin/26S proteasome-mediated proteolysis (UPP). This Arabidopsis thaliana (Mouse-ear cress) protein is Ubiquitin domain-containing protein DSK2a (DSK2A).